A 406-amino-acid polypeptide reads, in one-letter code: Sprouty-related, EVH1 domain-containing protein 1 (406 aa).

Positions 3 to 120 (GEQEPDDSYA…RGIRRAIEDL (118 aa)) constitute a WH1 domain. The tract at residues 124 to 154 (LPASCHGESETSEDGPQVNKEDHYSTHNNDH) is disordered. Residues 142–154 (NKEDHYSTHNNDH) are compositionally biased toward basic and acidic residues. The 53-residue stretch at 195-247 (PIRHVSFQDEDEIVRINPRDMIIRRYADYRHPDIFRNDVDREEPEDVTFFTKT) folds into the KBD domain. In terms of domain architecture, SPR spans 296 to 404 (SCVYCQERFN…CGCCGGKHKA (109 aa)).

Palmitoylated by ZDHHC17/HIP14. In terms of processing, ubiquitinated. Post-translationally, phosphorylated on tyrosine.

The protein localises to the cell membrane. Its function is as follows. Tyrosine kinase substrate that inhibits growth-factor-mediated activation of MAP kinase. This is Sprouty-related, EVH1 domain-containing protein 1 (spred1) from Xenopus tropicalis (Western clawed frog).